We begin with the raw amino-acid sequence, 338 residues long: 5-dehydro-2-deoxygluconokinase (338 aa).

The protein belongs to the carbohydrate kinase PfkB family.

It carries out the reaction 5-dehydro-2-deoxy-D-gluconate + ATP = 6-phospho-5-dehydro-2-deoxy-D-gluconate + ADP + H(+). The protein operates within polyol metabolism; myo-inositol degradation into acetyl-CoA; acetyl-CoA from myo-inositol: step 5/7. Its function is as follows. Catalyzes the phosphorylation of 5-dehydro-2-deoxy-D-gluconate (2-deoxy-5-keto-D-gluconate or DKG) to 6-phospho-5-dehydro-2-deoxy-D-gluconate (DKGP). This chain is 5-dehydro-2-deoxygluconokinase, found in Mesomycoplasma hyopneumoniae (strain 232) (Mycoplasma hyopneumoniae).